A 383-amino-acid polypeptide reads, in one-letter code: Chaperone protein DnaJ (383 aa).

Residues Asp5–Gly69 enclose the J domain. The segment at Gly138–Arg222 adopts a CR-type zinc-finger fold. Residues Cys151, Cys154, Cys168, Cys171, Cys194, Cys197, Cys210, and Cys213 each contribute to the Zn(2+) site. 4 CXXCXGXG motif repeats span residues Cys151 to Gly158, Cys168 to Gly175, Cys194 to Gly201, and Cys210 to Gly217.

Belongs to the DnaJ family. As to quaternary structure, homodimer. Zn(2+) is required as a cofactor.

The protein localises to the cytoplasm. Its function is as follows. Participates actively in the response to hyperosmotic and heat shock by preventing the aggregation of stress-denatured proteins and by disaggregating proteins, also in an autonomous, DnaK-independent fashion. Unfolded proteins bind initially to DnaJ; upon interaction with the DnaJ-bound protein, DnaK hydrolyzes its bound ATP, resulting in the formation of a stable complex. GrpE releases ADP from DnaK; ATP binding to DnaK triggers the release of the substrate protein, thus completing the reaction cycle. Several rounds of ATP-dependent interactions between DnaJ, DnaK and GrpE are required for fully efficient folding. Also involved, together with DnaK and GrpE, in the DNA replication of plasmids through activation of initiation proteins. This chain is Chaperone protein DnaJ, found in Limosilactobacillus reuteri (strain DSM 20016) (Lactobacillus reuteri).